Consider the following 287-residue polypeptide: DegV domain-containing protein DR_0500 (287 aa).

Positions 7 to 280 (FAVVTDGGLD…PRALGVAAAP (274 aa)) constitute a DegV domain. Positions 62 and 93 each coordinate hexadecanoate.

Its function is as follows. May bind long-chain fatty acids, such as palmitate, and may play a role in lipid transport or fatty acid metabolism. The polypeptide is DegV domain-containing protein DR_0500 (Deinococcus radiodurans (strain ATCC 13939 / DSM 20539 / JCM 16871 / CCUG 27074 / LMG 4051 / NBRC 15346 / NCIMB 9279 / VKM B-1422 / R1)).